The following is a 136-amino-acid chain: Urease subunit beta (136 aa).

The disordered stretch occupies residues 112 to 136 (ENDEYAGVFGDNGTENVNKKGGKRS).

The protein belongs to the urease beta subunit family. As to quaternary structure, heterotrimer of UreA (gamma), UreB (beta) and UreC (alpha) subunits. Three heterotrimers associate to form the active enzyme.

The protein localises to the cytoplasm. It carries out the reaction urea + 2 H2O + H(+) = hydrogencarbonate + 2 NH4(+). It functions in the pathway nitrogen metabolism; urea degradation; CO(2) and NH(3) from urea (urease route): step 1/1. This chain is Urease subunit beta, found in Staphylococcus aureus (strain MRSA252).